The sequence spans 847 residues: Ras GTPase-activating protein 2 (847 aa).

A compositionally biased stretch (low complexity) spans 1–21 (MAAAAPAAAASPEAPAVSGSA). The interval 1–31 (MAAAAPAAAASPEAPAVSGSADPETGDEDSR) is disordered. N-acetylalanine is present on Ala2. C2 domains lie at 19–137 (GSAD…ETWF) and 148–288 (VQGK…QAWY). The 218-residue stretch at 371–588 (NKLVPFITAV…TDVKKFLDEI (218 aa)) folds into the Ras-GAP domain. Ser554 carries the post-translational modification Phosphoserine. Positions 603-704 (VHLKEGEMYK…WIDVLCRVSR (102 aa)) constitute a PH domain. The Btk-type zinc-finger motif lies at 706–742 (NHNRLSSFHPSAYLNGNWLCCQETSESTPGCKPCTAG). His714, Cys725, Cys726, and Cys736 together coordinate Zn(2+). Residues 819 to 847 (DEPHEKYRKKRSSSAKYGSKENPIVGKIS) are disordered.

It is found in the cell membrane. In terms of biological role, inhibitory regulator of the Ras-cyclic AMP pathway. Binds inositol tetrakisphosphate (IP4) and phospholipids. In Mus musculus (Mouse), this protein is Ras GTPase-activating protein 2 (Rasa2).